The chain runs to 181 residues: Peptidyl-prolyl cis-trans isomerase H (181 aa).

A PPIase cyclophilin-type domain is found at 17–180 (FFDITLGGES…QDVTIIQCGE (164 aa)).

This sequence belongs to the cyclophilin-type PPIase family. PPIase H subfamily.

It localises to the nucleus. It carries out the reaction [protein]-peptidylproline (omega=180) = [protein]-peptidylproline (omega=0). In terms of biological role, PPIases accelerate the folding of proteins. It catalyzes the cis-trans isomerization of proline imidic peptide bonds in oligopeptides. In Aspergillus oryzae (strain ATCC 42149 / RIB 40) (Yellow koji mold), this protein is Peptidyl-prolyl cis-trans isomerase H (cyp3).